The chain runs to 68 residues: Antimicrobial peptide UyCT5 (68 aa).

The first 23 residues, 1 to 23 (MKNQFAILLLAVVFLQLISQSDA), serve as a signal peptide directing secretion. Leucine amide is present on Leu36. Positions 40–68 (GLKNADRLDELFDGDISDADLDFLRELMR) are excised as a propeptide.

Belongs to the non-disulfide-bridged peptide (NDBP) superfamily. Short antimicrobial peptide (group 4) family. Expressed by the venom gland.

Its subcellular location is the secreted. The protein localises to the target cell membrane. Its function is as follows. Antimicrobial peptide that inhibits the growth of Gram-positive (S.aureus, MIC=1 uM) and Gram-negative bacteria (E.coli, MIC=15 uM and P.aeruginosa, MIC=2 uM). It also shows 37% of hemolysis when 15 uM are tested (93% at 50 uM). In Urodacus yaschenkoi (Inland robust scorpion), this protein is Antimicrobial peptide UyCT5.